We begin with the raw amino-acid sequence, 454 residues long: tRNA modification GTPase MnmE (454 aa).

(6S)-5-formyl-5,6,7,8-tetrahydrofolate-binding residues include Arg-23, Glu-80, and Lys-120. One can recognise a TrmE-type G domain in the interval Gly-216–Gly-377. Asn-226 is a K(+) binding site. Residues Asn-226–Ser-231, Thr-245–Thr-251, Asp-270–Gly-273, Asn-335–Asp-338, and Ser-358–Arg-360 contribute to the GTP site. Position 230 (Ser-230) interacts with Mg(2+). K(+)-binding residues include Thr-245, Ile-247, and Thr-250. Thr-251 provides a ligand contact to Mg(2+). Residue Lys-454 participates in (6S)-5-formyl-5,6,7,8-tetrahydrofolate binding.

It belongs to the TRAFAC class TrmE-Era-EngA-EngB-Septin-like GTPase superfamily. TrmE GTPase family. As to quaternary structure, homodimer. Heterotetramer of two MnmE and two MnmG subunits. The cofactor is K(+).

Its subcellular location is the cytoplasm. Exhibits a very high intrinsic GTPase hydrolysis rate. Involved in the addition of a carboxymethylaminomethyl (cmnm) group at the wobble position (U34) of certain tRNAs, forming tRNA-cmnm(5)s(2)U34. The sequence is that of tRNA modification GTPase MnmE from Citrobacter koseri (strain ATCC BAA-895 / CDC 4225-83 / SGSC4696).